The following is a 404-amino-acid chain: Cysteine desulfurase IscS (404 aa).

Pyridoxal 5'-phosphate is bound by residues 75–76, asparagine 155, glutamine 183, and 203–205; these read AT and SGH. Residue lysine 206 is modified to N6-(pyridoxal phosphate)lysine. Threonine 243 contributes to the pyridoxal 5'-phosphate binding site. Cysteine 328 acts as the Cysteine persulfide intermediate in catalysis. [2Fe-2S] cluster is bound at residue cysteine 328.

It belongs to the class-V pyridoxal-phosphate-dependent aminotransferase family. NifS/IscS subfamily. In terms of assembly, homodimer. Forms a heterotetramer with IscU, interacts with other sulfur acceptors. Requires pyridoxal 5'-phosphate as cofactor.

The protein localises to the cytoplasm. The catalysed reaction is (sulfur carrier)-H + L-cysteine = (sulfur carrier)-SH + L-alanine. It functions in the pathway cofactor biosynthesis; iron-sulfur cluster biosynthesis. Master enzyme that delivers sulfur to a number of partners involved in Fe-S cluster assembly, tRNA modification or cofactor biosynthesis. Catalyzes the removal of elemental sulfur atoms from cysteine to produce alanine. Functions as a sulfur delivery protein for Fe-S cluster synthesis onto IscU, an Fe-S scaffold assembly protein, as well as other S acceptor proteins. This chain is Cysteine desulfurase IscS, found in Shewanella baltica (strain OS185).